A 599-amino-acid chain; its full sequence is Zinc finger BED domain-containing protein 3 (599 aa).

The tract at residues 70–104 (LNGGMGSPGNGPGTPLSRNNYAHHHQQHQNQQHVG) is disordered. A compositionally biased stretch (gly residues) spans 72-81 (GGMGSPGNGP). The segment at 123 to 176 (VKTAKVWRYFDELPTIEQAAECRICRKKIKATNSSTTGMIRHLRSCHVQEYQLV) adopts a BED-type zinc-finger fold. 4 residues coordinate Zn(2+): Cys-144, Cys-147, His-164, and His-169. 2 disordered regions span residues 208–283 (GIEN…QCQN) and 440–491 (ATSS…SSID). 2 stretches are compositionally biased toward low complexity: residues 223 to 246 (SQKS…SHFS) and 268 to 283 (SNSI…QCQN). Positions 440–455 (ATSSYEDVSVNESQMA) are enriched in polar residues. Positions 460–483 (GDEEEEIMEEEVEEDENVEIEDDT) are enriched in acidic residues.

In terms of tissue distribution, expressed in neuronal cell bodies in the ventral cord and HSN neurons.

Its subcellular location is the nucleus. Probable transcription factor. Involved in vulval organogenesis. During vulval development, may play a role in the regulation of cell cycle regulators such as cul-1. Positively modulates expression of homeobox protein lin-39, perhaps by binding to regulatory regions of the lin-39 gene, acting in the vulval lineage. Plays a role in larval molting. This chain is Zinc finger BED domain-containing protein 3, found in Caenorhabditis elegans.